Reading from the N-terminus, the 821-residue chain is Protein EFR3 homolog A (821 aa).

Phosphoserine occurs at positions 360, 363, 422, and 694.

This sequence belongs to the EFR3 family. In terms of assembly, component of a phosphatidylinositol 4-kinase (PI4K) complex, composed of PI4KA, EFR3 (EFR3A or EFR3B), TTC7 (TTC7A or TTC7B) and HYCC (HYCC1 or HYCC2). Palmitoylated at its N-terminus, anchoring the protein to the plasma membrane.

The protein localises to the cell membrane. The protein resides in the cytoplasm. It is found in the cytosol. Component of a complex required to localize phosphatidylinositol 4-kinase (PI4K) to the plasma membrane. The complex acts as a regulator of phosphatidylinositol 4-phosphate (PtdIns(4)P) synthesis. In the complex, EFR3A probably acts as the membrane-anchoring component. Also involved in responsiveness to G-protein-coupled receptors; it is however unclear whether this role is direct or indirect. This chain is Protein EFR3 homolog A, found in Homo sapiens (Human).